Reading from the N-terminus, the 299-residue chain is Cysteine synthase B (299 aa).

Lysine 45 is modified (N6-(pyridoxal phosphate)lysine). Residues asparagine 75, 178–182 (GTTGT), and serine 259 each bind pyridoxal 5'-phosphate.

The protein belongs to the cysteine synthase/cystathionine beta-synthase family. Requires pyridoxal 5'-phosphate as cofactor.

It catalyses the reaction O-acetyl-L-serine + hydrogen sulfide = L-cysteine + acetate. It participates in amino-acid biosynthesis; L-cysteine biosynthesis; L-cysteine from L-serine: step 2/2. In Pseudomonas aeruginosa (strain ATCC 15692 / DSM 22644 / CIP 104116 / JCM 14847 / LMG 12228 / 1C / PRS 101 / PAO1), this protein is Cysteine synthase B (cysM).